Here is a 423-residue protein sequence, read N- to C-terminus: GTPase HflX (423 aa).

A Hflx-type G domain is found at 202-366 (PAAAIVGYTN…LLETILRNQK (165 aa)). GTP contacts are provided by residues 208-215 (GYTNAGKS), 233-237 (FATLD), 255-258 (DTVG), 321-324 (NKID), and 344-346 (SAK). Mg(2+) contacts are provided by Ser215 and Thr235.

This sequence belongs to the TRAFAC class OBG-HflX-like GTPase superfamily. HflX GTPase family. As to quaternary structure, monomer. Associates with the 50S ribosomal subunit. Requires Mg(2+) as cofactor.

The protein resides in the cytoplasm. Functionally, GTPase that associates with the 50S ribosomal subunit and may have a role during protein synthesis or ribosome biogenesis. The sequence is that of GTPase HflX from Lacrimispora saccharolytica (strain ATCC 35040 / DSM 2544 / NRCC 2533 / WM1) (Clostridium saccharolyticum).